We begin with the raw amino-acid sequence, 198 residues long: Virion infectivity factor (198 aa).

The interval 76–115 (GERPWHLGHGIGLEWRQGKYSTQIDPETADQLIHTRYFTC) is RNA-binding. Position 97 is a phosphothreonine; by host MAP4K1 (T97). The HCCH motif signature appears at 109–140 (HTRYFTCFAAGAVRQAILGERILTFCHFQSGH). T145 carries the post-translational modification Phosphothreonine; by host. Residues 145–154 (TLQFLAFRKV) carry the BC-box-like motif motif. A multimerization region spans residues 152–170 (RKVVESQDKQPKGPRRPLP). Residues 159 to 198 (DKQPKGPRRPLPSVTKLTEDRWNKHRTTTGRRENHTLSGC) form a disordered region. At S171 the chain carries Phosphoserine; by host MAP4K1. The tract at residues 177–178 (ED) is membrane association. Over residues 188-198 (GRRENHTLSGC) the composition is skewed to basic and acidic residues.

This sequence belongs to the primate lentivirus group Vif protein family. As to quaternary structure, homomultimer; in vitro and presumably in vivo. Interacts with viral Pr55Gag precursor, host APOBEC3G, UBCE7IP1 isoform 3/ZIN, ABCE1 and possibly with SAT. Forms an E3 ligase complex by interacting with host CUL5 and elongin BC complex (ELOB and ELOC). Highly phosphorylated on serine and threonine residues. Thr-97 and Ser-171 are phosphorylated by the mitogen activated kinase MAP4K1. In terms of processing, polyubiquitinated and degraded by the proteasome in the presence of APOBEC3G.

The protein localises to the host cytoplasm. It is found in the host cell membrane. It localises to the virion. In terms of biological role, counteracts the innate antiviral activity of APOBEC3G. Forms a complex with host APOBEC3G thus preventing the entry of this lethally hypermutating enzyme into progeny virions. Functions as an adapter molecule, recruiting APOBEC3G to the ubiquitin-proteasome machinery. Targets APOBEC3G for degradation through the assembly with elongin BC complex, CUL5 and RBX1. Binds viral RNA and affects the stability of viral nucleoprotein core. May play a role in viral morphology. Interacts with host ABCE1, which seems to be involved in lentiviruses capsid formation and displays RNase L inhibitor activity. This interaction may play a role in protecting viral RNA from damage during viral assembly. May interact with host SAT, which is a regulator of polyamine cell level. This interaction may be relevant since polyamines affect viral RNA properties. In Pan troglodytes (Chimpanzee), this protein is Virion infectivity factor.